The primary structure comprises 107 residues: Ubiquitin-related modifier 1 (107 aa).

Gly107 bears the 1-thioglycine mark. Residue Gly107 forms a Glycyl lysine isopeptide (Gly-Lys) (interchain with K-? in acceptor proteins) linkage.

This sequence belongs to the URM1 family. Post-translationally, C-terminal thiocarboxylation occurs in 2 steps, it is first acyl-adenylated (-COAMP) via the hesA/moeB/thiF part of UBA4, then thiocarboxylated (-COSH) via the rhodanese domain of UBA4.

It is found in the cytoplasm. Its pathway is tRNA modification; 5-methoxycarbonylmethyl-2-thiouridine-tRNA biosynthesis. Its function is as follows. Acts as a sulfur carrier required for 2-thiolation of mcm(5)S(2)U at tRNA wobble positions of cytosolic tRNA(Lys), tRNA(Glu) and tRNA(Gln). Serves as sulfur donor in tRNA 2-thiolation reaction by being thiocarboxylated (-COSH) at its C-terminus by the MOCS3 homolog UBA4. The sulfur is then transferred to tRNA to form 2-thiolation of mcm(5)S(2)U. Prior mcm(5) tRNA modification by the elongator complex is required for 2-thiolation. Also acts as a ubiquitin-like protein (UBL) that is covalently conjugated via an isopeptide bond to lysine residues of target proteins such as AHP1. The thiocarboxylated form serves as substrate for conjugation and oxidative stress specifically induces the formation of UBL-protein conjugates. This chain is Ubiquitin-related modifier 1, found in Mycosarcoma maydis (Corn smut fungus).